The sequence spans 128 residues: L-ectoine synthase (128 aa).

It belongs to the ectoine synthase family.

It carries out the reaction (2S)-4-acetamido-2-aminobutanoate = L-ectoine + H2O. It functions in the pathway amine and polyamine biosynthesis; ectoine biosynthesis; L-ectoine from L-aspartate 4-semialdehyde: step 3/3. Its function is as follows. Catalyzes the circularization of gamma-N-acetyl-alpha,gamma-diaminobutyric acid (ADABA) to ectoine (1,4,5,6-tetrahydro-2-methyl-4-pyrimidine carboxylic acid), which is an excellent osmoprotectant. The sequence is that of L-ectoine synthase from Vibrio campbellii (strain ATCC BAA-1116).